The chain runs to 142 residues: Putative pre-16S rRNA nuclease (142 aa).

This sequence belongs to the YqgF nuclease family.

The protein resides in the cytoplasm. In terms of biological role, could be a nuclease involved in processing of the 5'-end of pre-16S rRNA. The sequence is that of Putative pre-16S rRNA nuclease from Staphylococcus epidermidis (strain ATCC 35984 / DSM 28319 / BCRC 17069 / CCUG 31568 / BM 3577 / RP62A).